We begin with the raw amino-acid sequence, 428 residues long: MSFRSQTSSTTSMRPVSSYSSRSISLHRSVPLGSSASVVGGAGGHGARISSGGFGLASGYSSGSSFSMSVKGSGLFNNEKETMQILNDRLASYLETVRNLEQANSKLELQIRETLEKRGPTTQDYSAYEKVVEDLKSQIYDMTVNNARLVLQIDNARLATDDFRVKYESELAIRQSVESDIIGLRKVIDDTNINRMNLETDIESLKEELIFIKRSHQTDVEELRKHISECGVQVDVDAPKGQDLSKIMEEIRAQYETIIQKNREELKDWHNSQILIVETEVKENTEALQKSRTEVTELRRQFQTLEIDIESLRTMKASLEANLHDVEMRNNMEMEGFNFIIRQQEADLQQLRTSIQAQVHEYQALLNIKMKLEAEIATYRRLLDGEDFRLQDALAVQTTKVQKKITVTETVVDGKVVSQSSEVQEIKK.

The head stretch occupies residues 2–78 (SFRSQTSSTT…SVKGSGLFNN (77 aa)). Residues 79–114 (EKETMQILNDRLASYLETVRNLEQANSKLELQIRET) form a coil 1A region. One can recognise an IF rod domain in the interval 79–390 (EKETMQILND…RLLDGEDFRL (312 aa)). Positions 115-131 (LEKRGPTTQDYSAYEKV) are linker 1. The coil 1B stretch occupies residues 132–223 (VEDLKSQIYD…RSHQTDVEEL (92 aa)). Residues 224 to 247 (RKHISECGVQVDVDAPKGQDLSKI) form a linker 12 region. Residues 248 to 385 (MEEIRAQYET…IATYRRLLDG (138 aa)) form a coil 2 region. Residues 386–428 (EDFRLQDALAVQTTKVQKKITVTETVVDGKVVSQSSEVQEIKK) are tail.

The protein belongs to the intermediate filament family. In terms of assembly, heterotetramer of two type I and two type II keratins. Keratin-18 associates with keratin-8. Post-translationally, phosphorylated. In terms of processing, proteolytically cleaved by caspases during epithelial cell apoptosis.

In terms of biological role, when phosphorylated, plays a role in filament reorganization. The chain is Keratin, type I cytoskeletal 18-A from Polypterus senegalus (Senegal bichir).